The following is a 1024-amino-acid chain: Beta-galactosidase (1024 aa).

Substrate is bound by residues Asn103 and Asp202. Asp202 serves as a coordination point for Na(+). Glu417, His419, and Glu462 together coordinate Mg(2+). Substrate is bound by residues Glu462 and 538–541 (EYAH). Glu462 serves as the catalytic Proton donor. Residue Glu538 is the Nucleophile of the active site. Residue Asn598 participates in Mg(2+) binding. Residues Phe602 and Asn605 each coordinate Na(+). Residues Asn605 and Trp1000 each coordinate substrate.

It belongs to the glycosyl hydrolase 2 family. As to quaternary structure, homotetramer. The cofactor is Mg(2+). Requires Na(+) as cofactor.

It catalyses the reaction Hydrolysis of terminal non-reducing beta-D-galactose residues in beta-D-galactosides.. In Klebsiella pneumoniae, this protein is Beta-galactosidase.